We begin with the raw amino-acid sequence, 215 residues long: Probable transaldolase (215 aa).

Residue K83 is the Schiff-base intermediate with substrate of the active site.

Belongs to the transaldolase family. Type 3B subfamily.

It is found in the cytoplasm. It carries out the reaction D-sedoheptulose 7-phosphate + D-glyceraldehyde 3-phosphate = D-erythrose 4-phosphate + beta-D-fructose 6-phosphate. It participates in carbohydrate degradation; pentose phosphate pathway; D-glyceraldehyde 3-phosphate and beta-D-fructose 6-phosphate from D-ribose 5-phosphate and D-xylulose 5-phosphate (non-oxidative stage): step 2/3. In terms of biological role, transaldolase is important for the balance of metabolites in the pentose-phosphate pathway. This chain is Probable transaldolase, found in Methanococcus vannielii (strain ATCC 35089 / DSM 1224 / JCM 13029 / OCM 148 / SB).